A 307-amino-acid chain; its full sequence is Nicotinamide/nicotinic acid mononucleotide adenylyltransferase 2 (307 aa).

Residues Ser-16 and Phe-17 each contribute to the NAD(+) site. His-24 is a binding site for ATP. 2 residues coordinate NAD(+): Trp-92 and Thr-95. S-palmitoyl cysteine attachment occurs at residues Cys-164 and Cys-165. NAD(+)-binding residues include Gly-200, Asp-202, Leu-212, Trp-213, and Arg-232. Residue 271–274 (TKSR) participates in ATP binding.

Belongs to the eukaryotic NMN adenylyltransferase family. As to quaternary structure, monomer. Requires Mg(2+) as cofactor. In terms of processing, degraded in response to injured neurite. Degradation is caused by polyubiquitination by MYCBP2 after recognition by FBXO45. Post-translationally, palmitoylated; palmitoylation is required for membrane association.

It is found in the golgi apparatus membrane. The protein resides in the cytoplasmic vesicle membrane. Its subcellular location is the cytoplasm. It localises to the cell projection. The protein localises to the axon. The enzyme catalyses beta-nicotinamide D-ribonucleotide + ATP + H(+) = diphosphate + NAD(+). It catalyses the reaction nicotinate beta-D-ribonucleotide + ATP + H(+) = deamido-NAD(+) + diphosphate. Its pathway is cofactor biosynthesis; NAD(+) biosynthesis; NAD(+) from nicotinamide D-ribonucleotide: step 1/1. It participates in cofactor biosynthesis; NAD(+) biosynthesis; deamido-NAD(+) from nicotinate D-ribonucleotide: step 1/1. With respect to regulation, inhibited by P1-(adenosine-5')-P3-(nicotinamide-riboside-5')-triphosphate (Np3AD) and P1-(adenosine-5')-P4-(nicotinamide-riboside-5')-tetraphosphate (Np4AD). Nicotinamide/nicotinate-nucleotide adenylyltransferase that acts as an axon maintenance factor. Axon survival factor required for the maintenance of healthy axons: acts by delaying Wallerian axon degeneration, an evolutionarily conserved process that drives the loss of damaged axons. Catalyzes the formation of NAD(+) from nicotinamide mononucleotide (NMN) and ATP. Can also use the deamidated form; nicotinic acid mononucleotide (NaMN) as substrate but with a lower efficiency. Cannot use triazofurin monophosphate (TrMP) as substrate. Also catalyzes the reverse reaction, i.e. the pyrophosphorolytic cleavage of NAD(+). For the pyrophosphorolytic activity prefers NAD(+), NADH and NaAD as substrates and degrades nicotinic acid adenine dinucleotide phosphate (NHD) less effectively. Fails to cleave phosphorylated dinucleotides NADP(+), NADPH and NaADP(+). Also acts as an activator of ADP-ribosylation by supporting the catalytic activity of PARP16 and promoting mono-ADP-ribosylation of ribosomes by PARP16. May be involved in the maintenance of axonal integrity. This chain is Nicotinamide/nicotinic acid mononucleotide adenylyltransferase 2 (NMNAT2), found in Bos taurus (Bovine).